The primary structure comprises 625 residues: RalA-binding protein 1 (625 aa).

Basic and acidic residues-rich tracts occupy residues M1–F11 and A20–G60. A disordered region spans residues M1 to D172. S68 and S69 each carry phosphoserine. Residues K94–D157 show a composition bias toward basic and acidic residues. The Rho-GAP domain occupies V191–P385. The disordered stretch occupies residues Q443–D500. Over residues A475–Q484 the composition is skewed to polar residues.

Interacts with CycB and numb.

Participates in receptor endocytosis during interphase, is also involved in mitotic processes when endocytosis is switched off. The protein is RalA-binding protein 1 of Drosophila melanogaster (Fruit fly).